A 113-amino-acid polypeptide reads, in one-letter code: Large ribosomal subunit protein uL22 (113 aa).

The protein belongs to the universal ribosomal protein uL22 family. As to quaternary structure, part of the 50S ribosomal subunit.

This protein binds specifically to 23S rRNA; its binding is stimulated by other ribosomal proteins, e.g. L4, L17, and L20. It is important during the early stages of 50S assembly. It makes multiple contacts with different domains of the 23S rRNA in the assembled 50S subunit and ribosome. Its function is as follows. The globular domain of the protein is located near the polypeptide exit tunnel on the outside of the subunit, while an extended beta-hairpin is found that lines the wall of the exit tunnel in the center of the 70S ribosome. The sequence is that of Large ribosomal subunit protein uL22 from Geobacillus stearothermophilus (Bacillus stearothermophilus).